The primary structure comprises 312 residues: Elongation factor Ts, mitochondrial (312 aa).

It belongs to the EF-Ts family.

The protein resides in the mitochondrion. Associates with the EF-Tu.GDP complex and induces the exchange of GDP to GTP. It remains bound to the aminoacyl-tRNA.EF-Tu.GTP complex up to the GTP hydrolysis stage on the ribosome. The chain is Elongation factor Ts, mitochondrial (tsfm) from Xenopus laevis (African clawed frog).